The primary structure comprises 282 residues: Pantothenate synthetase (282 aa).

Met30–His37 lines the ATP pocket. Residue His37 is the Proton donor of the active site. Gln60 contributes to the (R)-pantoate binding site. A beta-alanine-binding site is contributed by Gln60. Residue Gly146–Asp149 coordinates ATP. (R)-pantoate is bound at residue Gln152. ATP-binding positions include Ile175 and Lys183–Arg186.

It belongs to the pantothenate synthetase family. In terms of assembly, homodimer.

The protein localises to the cytoplasm. The catalysed reaction is (R)-pantoate + beta-alanine + ATP = (R)-pantothenate + AMP + diphosphate + H(+). The protein operates within cofactor biosynthesis; (R)-pantothenate biosynthesis; (R)-pantothenate from (R)-pantoate and beta-alanine: step 1/1. Functionally, catalyzes the condensation of pantoate with beta-alanine in an ATP-dependent reaction via a pantoyl-adenylate intermediate. This chain is Pantothenate synthetase, found in Campylobacter jejuni subsp. jejuni serotype O:23/36 (strain 81-176).